The sequence spans 216 residues: MRRESKQMTIFRSGDQPPGWCELTDFEFVDLTDQPLPIPLAAEKQRLLVTSGSCCVRSAEGAQVLSEGQFLDMDGANGPFTADAGEGAAQVLVFYGRWGNELGGCGVFKLGPDTPVPVRGDPVNYPKSTNFDSHYHDCDEYWVIIEGAGTVVVGSRSFEVEVGDCVAIGMGHHHDLSEVWSDVKGAYFETTLEGRKRFGHLWEHTHGPADVRPERV.

In terms of domain architecture, Cupin type-2 spans 125–176 (YPKSTNFDSHYHDCDEYWVIIEGAGTVVVGSRSFEVEVGDCVAIGMGHHHDL).

This is an uncharacterized protein from Sinorhizobium fredii (strain NBRC 101917 / NGR234).